A 150-amino-acid chain; its full sequence is Lipoprotein signal peptidase (150 aa).

Transmembrane regions (helical) follow at residues V59–P79 and L84–I101. Residues D111 and D125 contribute to the active site. A helical membrane pass occupies residues I117–W137.

This sequence belongs to the peptidase A8 family.

The protein localises to the cell membrane. The catalysed reaction is Release of signal peptides from bacterial membrane prolipoproteins. Hydrolyzes -Xaa-Yaa-Zaa-|-(S,diacylglyceryl)Cys-, in which Xaa is hydrophobic (preferably Leu), and Yaa (Ala or Ser) and Zaa (Gly or Ala) have small, neutral side chains.. The protein operates within protein modification; lipoprotein biosynthesis (signal peptide cleavage). Its function is as follows. This protein specifically catalyzes the removal of signal peptides from prolipoproteins. In Moorella thermoacetica (strain ATCC 39073 / JCM 9320), this protein is Lipoprotein signal peptidase.